The chain runs to 199 residues: Thymidine kinase (199 aa).

Residues 23–30 (GSMFSGKT) and 95–98 (DEAQ) each bind ATP. Catalysis depends on E96, which acts as the Proton acceptor. 4 residues coordinate Zn(2+): C152, C155, C184, and C187.

This sequence belongs to the thymidine kinase family. Homotetramer.

The protein resides in the cytoplasm. It carries out the reaction thymidine + ATP = dTMP + ADP + H(+). This Bacteroides fragilis (strain ATCC 25285 / DSM 2151 / CCUG 4856 / JCM 11019 / LMG 10263 / NCTC 9343 / Onslow / VPI 2553 / EN-2) protein is Thymidine kinase.